The sequence spans 1273 residues: Cullin-associated NEDD8-dissociated protein 2 (1273 aa).

Position 2 is an N-acetylserine (Ser-2). HEAT repeat units follow at residues 2 to 36, 37 to 74, 82 to 119, 121 to 157, 167 to 205, 209 to 246, 248 to 284, 292 to 329, 364 to 405, 409 to 446, 469 to 506, 554 to 591, 602 to 641, 685 to 722, 727 to 764, 768 to 807, 809 to 850, 894 to 931, 933 to 968, 970 to 1003, 1004 to 1040, 1044 to 1081, 1085 to 1121, 1142 to 1178, 1194 to 1231, and 1241 to 1273; these read STGA…LDPL, PWLQ…ELQK, DSER…KVKE, QVEN…ELPP, SVCR…RLGA, TFHA…ACST, LFVE…SVGR, AHLD…KCPK, TEDS…SRPD, DFHC…HTRP, AQVP…VLPG, PHLP…TLWP, PYVG…HLGD, PILA…SQGL, PAVR…TQPA, EVSG…TRPP, VEYS…ALSA, GPQR…GNLP, FLPF…DNLK, YVED…LVFV, NPPF…DQPH, PLLK…NKPS, DLLD…DDGL, LDIC…LCPA, TCTA…NPEV, and STQI…MELS. The segment at 352-383 is disordered; the sequence is YNHDSDEEEQMETEDSEFSEQESEDEYSDDDD. Residues 356 to 383 are compositionally biased toward acidic residues; sequence SDEEEQMETEDSEFSEQESEDEYSDDDD.

It belongs to the CAND family. Binds TBP, CNOT3 and UBE3C. Ubiquitinated and targeted for proteasomal degradation. As to expression, detected in heart and skeletal muscle.

The protein localises to the nucleus. In terms of biological role, probable assembly factor of SCF (SKP1-CUL1-F-box protein) E3 ubiquitin ligase complexes that promotes the exchange of the substrate-recognition F-box subunit in SCF complexes, thereby playing a key role in the cellular repertoire of SCF complexes. The protein is Cullin-associated NEDD8-dissociated protein 2 (Cand2) of Rattus norvegicus (Rat).